A 165-amino-acid chain; its full sequence is Ribosome maturation factor RimM (165 aa).

Residues 89–161 (EADTHYIVDL…KIVVKPVRQW (73 aa)) enclose the PRC barrel domain.

This sequence belongs to the RimM family. In terms of assembly, binds ribosomal protein uS19.

It localises to the cytoplasm. Its function is as follows. An accessory protein needed during the final step in the assembly of 30S ribosomal subunit, possibly for assembly of the head region. Essential for efficient processing of 16S rRNA. May be needed both before and after RbfA during the maturation of 16S rRNA. It has affinity for free ribosomal 30S subunits but not for 70S ribosomes. The protein is Ribosome maturation factor RimM of Clostridium botulinum (strain Alaska E43 / Type E3).